A 373-amino-acid polypeptide reads, in one-letter code: GDP-mannose 4,6 dehydratase 2 (373 aa).

Polar residues predominate over residues 1–15 (MASENNGSRSDSESI). Residues 1–21 (MASENNGSRSDSESITAPKAD) are disordered. NADP(+)-binding positions include 35–40 (GITGQD), R60, 91–92 (DL), 113–117 (LAAQS), and Y128. Position 117 (S117) interacts with substrate. A substrate-binding site is contributed by S162. The active site involves S162. Catalysis depends on nucleophile residues E164 and Y185. Residue Y185 coordinates substrate. K189 is a binding site for NADP(+). Residue N214 coordinates substrate. H215 and R220 together coordinate NADP(+). Substrate contacts are provided by residues 220–228 (RGENFVTRK), G247, R253, and 314–317 (RPAE).

This sequence belongs to the NAD(P)-dependent epimerase/dehydratase family. GDP-mannose 4,6-dehydratase subfamily. As to quaternary structure, homotetramer. Binds to GER1. The cofactor is NADP(+). As to expression, expressed in roots, flowers, siliques, leaves and stems. Not expressed in the root meristem and the proximal part of the elongation zone, or in emerging lateral roots. Expressed in trichomes and guard cells, and in pollen just before anthesis.

It carries out the reaction GDP-alpha-D-mannose = GDP-4-dehydro-alpha-D-rhamnose + H2O. It functions in the pathway nucleotide-sugar biosynthesis; GDP-L-fucose biosynthesis via de novo pathway; GDP-L-fucose from GDP-alpha-D-mannose: step 1/2. In terms of biological role, catalyzes the conversion of GDP-D-mannose to GDP-4-dehydro-6-deoxy-D-mannose. The protein is GDP-mannose 4,6 dehydratase 2 (MUR1) of Arabidopsis thaliana (Mouse-ear cress).